Consider the following 312-residue polypeptide: Malate dehydrogenase (312 aa).

NAD(+)-binding positions include 7–13 and D34; that span reads GAAGGIG. Residues R81 and R87 each coordinate substrate. NAD(+)-binding positions include N94 and 117-119; that span reads ITN. The substrate site is built by N119 and R153. Residue H177 is the Proton acceptor of the active site. M227 lines the NAD(+) pocket.

The protein belongs to the LDH/MDH superfamily. MDH type 1 family. In terms of assembly, homodimer.

The enzyme catalyses (S)-malate + NAD(+) = oxaloacetate + NADH + H(+). In terms of biological role, catalyzes the reversible oxidation of malate to oxaloacetate. In Klebsiella pneumoniae (strain 342), this protein is Malate dehydrogenase.